A 257-amino-acid chain; its full sequence is Electron transfer flavoprotein subunit beta (257 aa).

Belongs to the ETF beta-subunit/FixA family. In terms of assembly, heterodimer of an alpha and a beta subunit. FAD is required as a cofactor. The cofactor is AMP.

Its function is as follows. The electron transfer flavoprotein serves as a specific electron acceptor for other dehydrogenases. It transfers the electrons to the main respiratory chain via ETF-ubiquinone oxidoreductase (ETF dehydrogenase). The polypeptide is Electron transfer flavoprotein subunit beta (etfB) (Bacillus subtilis (strain 168)).